Here is a 264-residue protein sequence, read N- to C-terminus: Apolipoprotein A-I (264 aa).

Positions 1–18 (MKAVVLTVAVLFLTGSQA) are cleaved as a signal peptide. 2 consecutive repeat copies span residues 67–88 (LKLLDNWDTLGSSISKLREQLG) and 89–110 (PVTQEFWDNLEKDTEWLRQEMN). Positions 67-264 (LKLLDNWDTL…DDAAKKLSSQ (198 aa)) are 10 X approximate tandem repeats. M109 carries the methionine sulfoxide modification. The 3; half-length repeat unit spans residues 111–121 (KDLEEVKQKVQ). 3 repeat units span residues 122–143 (PYLEEFQKKWQEEVERYRQKVE), 144–165 (PLSTELREGARQKLQELQEKLT), and 166–187 (PLGEELRDHARTHVDVLRTQLA). Residues 188-207 (PYSDKMRERLAERLTALKDS) form a 7; truncated repeat. M193 is subject to Methionine sulfoxide. Repeat 8 spans residues 208-229 (ASFAEYHAKASEHLKTLREKAK). The stretch at 230 to 240 (PAIEDLGQGLL) is one 9; half-length repeat. Repeat unit 10 spans residues 241 to 264 (PVLENLKASFLSAIDDAAKKLSSQ).

Belongs to the apolipoprotein A1/A4/E family. Homodimer. Interacts with APOA1BP and CLU. Component of a sperm activating protein complex (SPAP), consisting of APOA1, an immunoglobulin heavy chain, an immunoglobulin light chain and albumin. Interacts with NDRG1. Interacts with SCGB3A2. Interacts with NAXE and YJEFN3. Post-translationally, glycosylated. In terms of processing, palmitoylated. Phosphorylation sites are present in the extracellular medium.

The protein resides in the secreted. Participates in the reverse transport of cholesterol from tissues to the liver for excretion by promoting cholesterol efflux from tissues and by acting as a cofactor for the lecithin cholesterol acyltransferase (LCAT). As part of the SPAP complex, activates spermatozoa motility. This chain is Apolipoprotein A-I (APOA1), found in Castor canadensis (American beaver).